Consider the following 222-residue polypeptide: Protein-L-isoaspartate O-methyltransferase (222 aa).

The active site involves Ser69.

Belongs to the methyltransferase superfamily. L-isoaspartyl/D-aspartyl protein methyltransferase family.

It is found in the cytoplasm. It catalyses the reaction [protein]-L-isoaspartate + S-adenosyl-L-methionine = [protein]-L-isoaspartate alpha-methyl ester + S-adenosyl-L-homocysteine. Functionally, catalyzes the methyl esterification of L-isoaspartyl residues in peptides and proteins that result from spontaneous decomposition of normal L-aspartyl and L-asparaginyl residues. It plays a role in the repair and/or degradation of damaged proteins. The chain is Protein-L-isoaspartate O-methyltransferase from Nitrosomonas eutropha (strain DSM 101675 / C91 / Nm57).